The sequence spans 252 residues: uncharacterized protein (252 aa).

Positions 3-58 (AKDRIQAIKQMVANDKKVTVSNLSGIFQVTEETIRRDLEKLEDEGFLTRTYGGAVL) constitute an HTH deoR-type domain. Residues 20–39 (VTVSNLSGIFQVTEETIRRD) constitute a DNA-binding region (H-T-H motif).

This is an uncharacterized protein from Escherichia coli (strain K12).